The chain runs to 218 residues: Small ribosomal subunit protein uS3c (218 aa).

The KH type-2 domain occupies 43-118 (IKNYVQKNMK…KLNISITRIE (76 aa)).

Belongs to the universal ribosomal protein uS3 family. As to quaternary structure, part of the 30S ribosomal subunit.

The protein localises to the plastid. It is found in the chloroplast. The polypeptide is Small ribosomal subunit protein uS3c (rps3) (Populus trichocarpa (Western balsam poplar)).